We begin with the raw amino-acid sequence, 471 residues long: UDP-N-acetylmuramoylalanine--D-glutamate ligase (471 aa).

Position 123–129 (123–129 (GTNGKST)) interacts with ATP.

It belongs to the MurCDEF family.

It is found in the cytoplasm. It catalyses the reaction UDP-N-acetyl-alpha-D-muramoyl-L-alanine + D-glutamate + ATP = UDP-N-acetyl-alpha-D-muramoyl-L-alanyl-D-glutamate + ADP + phosphate + H(+). It participates in cell wall biogenesis; peptidoglycan biosynthesis. Functionally, cell wall formation. Catalyzes the addition of glutamate to the nucleotide precursor UDP-N-acetylmuramoyl-L-alanine (UMA). The chain is UDP-N-acetylmuramoylalanine--D-glutamate ligase from Caulobacter vibrioides (strain ATCC 19089 / CIP 103742 / CB 15) (Caulobacter crescentus).